The sequence spans 462 residues: Cysteine--tRNA ligase (462 aa).

A Zn(2+)-binding site is contributed by C24. A 'HIGH' region motif is present at residues 26-36 (PTVYDDAHLGH). Residues C199, H224, and E228 each contribute to the Zn(2+) site. The short motif at 256–260 (KMSKS) is the 'KMSKS' region element. K259 contributes to the ATP binding site.

Belongs to the class-I aminoacyl-tRNA synthetase family. Monomer. Requires Zn(2+) as cofactor.

The protein localises to the cytoplasm. It catalyses the reaction tRNA(Cys) + L-cysteine + ATP = L-cysteinyl-tRNA(Cys) + AMP + diphosphate. In Campylobacter jejuni subsp. jejuni serotype O:6 (strain 81116 / NCTC 11828), this protein is Cysteine--tRNA ligase.